Consider the following 112-residue polypeptide: Small ribosomal subunit protein bS16 (112 aa).

It belongs to the bacterial ribosomal protein bS16 family.

This Karelsulcia muelleri (strain GWSS) (Sulcia muelleri) protein is Small ribosomal subunit protein bS16.